We begin with the raw amino-acid sequence, 148 residues long: Lysozyme C (148 aa).

A signal peptide spans 1 to 18; that stretch reads MKVLILLGLVLLSVMVQG. The C-type lysozyme domain maps to 19–148; sequence KVFERCELAR…VSQYIQGCGV (130 aa). Intrachain disulfides connect cysteine 24–cysteine 146, cysteine 48–cysteine 134, cysteine 83–cysteine 99, and cysteine 95–cysteine 113. Residues glutamate 53 and aspartate 71 contribute to the active site.

The protein belongs to the glycosyl hydrolase 22 family. As to quaternary structure, monomer.

The protein localises to the secreted. The catalysed reaction is Hydrolysis of (1-&gt;4)-beta-linkages between N-acetylmuramic acid and N-acetyl-D-glucosamine residues in a peptidoglycan and between N-acetyl-D-glucosamine residues in chitodextrins.. Lysozymes have primarily a bacteriolytic function; those in tissues and body fluids are associated with the monocyte-macrophage system and enhance the activity of immunoagents. The protein is Lysozyme C (LYZ) of Saguinus oedipus (Cotton-top tamarin).